The following is a 401-amino-acid chain: Anhydro-N-acetylmuramic acid kinase (401 aa).

ATP is bound at residue 25-32 (GTSLDGLD).

The protein belongs to the anhydro-N-acetylmuramic acid kinase family.

It carries out the reaction 1,6-anhydro-N-acetyl-beta-muramate + ATP + H2O = N-acetyl-D-muramate 6-phosphate + ADP + H(+). It participates in amino-sugar metabolism; 1,6-anhydro-N-acetylmuramate degradation. It functions in the pathway cell wall biogenesis; peptidoglycan recycling. Functionally, catalyzes the specific phosphorylation of 1,6-anhydro-N-acetylmuramic acid (anhMurNAc) with the simultaneous cleavage of the 1,6-anhydro ring, generating MurNAc-6-P. Is required for the utilization of anhMurNAc either imported from the medium or derived from its own cell wall murein, and thus plays a role in cell wall recycling. This Pseudoalteromonas atlantica (strain T6c / ATCC BAA-1087) protein is Anhydro-N-acetylmuramic acid kinase.